The chain runs to 365 residues: L-lactate oxidase (365 aa).

Residues 6–365 (RIPPGVWNAI…ITHDTLTPSC (360 aa)) enclose the FMN hydroxy acid dehydrogenase domain. Y32 contacts pyruvate. Residues 85-87 (PVA), S114, and Q135 contribute to the FMN site. Pyruvate is bound at residue Y137. Positions 163, 237, and 259 each coordinate FMN. Residues H261 and R264 each contribute to the pyruvate site. H261 serves as the catalytic Proton acceptor. FMN contacts are provided by residues 292–296 (DGGVR) and R316.

This sequence belongs to the FMN-dependent alpha-hydroxy acid dehydrogenase family. In terms of assembly, homotetramer. FMN is required as a cofactor.

It carries out the reaction (S)-lactate + O2 = pyruvate + H2O2. The catalysed reaction is glycolate + O2 = glyoxylate + H2O2. In terms of biological role, catalyzes the oxidation of (S)-lactate (L-lactate) to pyruvate, with a reduction of O2 to H2O2. To a lesser extent is also able to use glycolate as substrate. In Alicycliphilus denitrificans (strain DSM 14773 / CIP 107495 / K601), this protein is L-lactate oxidase.